The chain runs to 555 residues: Developmental and secondary metabolism regulator veA (555 aa).

3 disordered regions span residues M1–R23, E39–P60, and R234–S533. Positions E13 to R23 are enriched in basic and acidic residues. The Velvet domain occupies G25 to R228. Residues E39 to C44 carry the Nuclear localization signal motif. Over residues K239–D258 the composition is skewed to basic and acidic residues. The span at A311–P331 shows a compositional bias: pro residues. Composition is skewed to polar residues over residues R336–Y372 and H380–E389. Residues Q439 to G479 form a PEST region. 2 stretches are compositionally biased toward basic and acidic residues: residues R492 to R503 and A519 to S533.

Belongs to the velvet family. VeA subfamily. In terms of assembly, component of the heterotrimeric velvet complex composed of laeA, veA and velB; VeA acting as a bridging protein between laeA and velB.

The protein localises to the nucleus. It localises to the cytoplasm. Functionally, component of the velvet transcription factor complex that controls sexual/asexual developmental ratio in response to light, promoting sexual development in the darkness while stimulating asexual sporulation under illumination. The velvet complex hat acts as a global regulator for secondary metabolite gene expression. Increases spore dispersing capacity by impacting conidiophore architecture. In Aspergillus niger (strain ATCC 1015 / CBS 113.46 / FGSC A1144 / LSHB Ac4 / NCTC 3858a / NRRL 328 / USDA 3528.7), this protein is Developmental and secondary metabolism regulator veA.